The primary structure comprises 131 residues: Small ribosomal subunit protein uS12 (131 aa).

Asp89 bears the 3-methylthioaspartic acid mark. Residues 106–131 (GVDGRKQGRSKYGAKKAKVAKTASAK) form a disordered region. Residues 112-124 (QGRSKYGAKKAKV) are compositionally biased toward basic residues.

This sequence belongs to the universal ribosomal protein uS12 family. Part of the 30S ribosomal subunit. Contacts proteins S8 and S17. May interact with IF1 in the 30S initiation complex.

Its function is as follows. With S4 and S5 plays an important role in translational accuracy. Interacts with and stabilizes bases of the 16S rRNA that are involved in tRNA selection in the A site and with the mRNA backbone. Located at the interface of the 30S and 50S subunits, it traverses the body of the 30S subunit contacting proteins on the other side and probably holding the rRNA structure together. The combined cluster of proteins S8, S12 and S17 appears to hold together the shoulder and platform of the 30S subunit. This is Small ribosomal subunit protein uS12 from Endomicrobium trichonymphae.